A 193-amino-acid chain; its full sequence is Transforming protein RhoA (193 aa).

Residues 12–19 and 30–37 contribute to the GTP site; these read GDGACGKT and FPEVYVPT. An Effector region motif is present at residues 34–42; the sequence is YVPTVFENY. Residue Asn-41 is modified to (Microbial infection) ADP-ribosylasparagine; by botulinum toxin. GTP is bound by residues 59–63 and 117–120; these read DTAGQ and NKKD. The switch II region; involved in RAP1GDS1 isoform 2 binding stretch occupies residues 61-78; sequence AGQEDYDRLRPLSYPDTD. Residue Gln-63 is modified to 5-glutamyl serotonin. Lys-135 participates in a covalent cross-link: Glycyl lysine isopeptide (Lys-Gly) (interchain with G-Cter in ubiquitin). 160 to 162 contacts GTP; the sequence is SAK. Position 188 is a phosphoserine; by PKG/PRKG1 (Ser-188). Cys-190 is subject to Cysteine methyl ester. The S-geranylgeranyl cysteine moiety is linked to residue Cys-190. Residues 191–193 constitute a propeptide, removed in mature form; that stretch reads LVL.

Belongs to the small GTPase superfamily. Rho family. As to quaternary structure, interacts with ARHGEF28. Interacts (via GTP-bound form) with RIPOR1 (via N-terminus); this interaction links RHOA to STK24 and STK26 kinases. Interacts with RIPOR2 (via active GTP- or inactive GDP-bound forms) isoform 1 and isoform 2; these interactions are direct, block the loading of GTP to RHOA and decrease upon chemokine CCL19 stimulation in primary T lymphocytes. Binds PRKCL1, ROCK1 and ROCK2. Interacts with ARHGEF2, ARHGEF3, NET1 and RTKN. Interacts with PLCE1 and AKAP13. Interacts with DIAPH1. Interacts (in the constitutively activated, GTP-bound form) with DGKQ. Interacts with RACK1; enhances RHOA activation. Interacts with PKP4; the interaction is detected at the midbody. Interacts (GTP-bound form preferentially) with PKN2; the interaction stimulates autophosphorylation and phosphorylation of PKN2. Interacts with ARHGDIA; this interaction inactivates and stabilizes RHOA. Interacts with ARHGDIB. Interacts (GTP-bound form) with KCNA2 (via cytoplasmic N-terminal domain). Interacts (GTP-bound form) with ECT2; the interaction results in allosteric activation of ECT2. Interacts with RAP1GDS1; the interaction is direct and in a 1:1 stoichiometry. Mg(2+) is required as a cofactor. Phosphorylation by PRKG1 at Ser-188 inactivates RHOA signaling. Phosphorylation by SLK at Ser-188 in response to AGTR2 activation. Post-translationally, ubiquitinated by the BCR(KCTD13) and BCR(TNFAIP1) E3 ubiquitin ligase complexes, leading to its degradation by the proteasome, thereby regulating the actin cytoskeleton and synaptic transmission in neurons. Ubiquitinated at Lys-135 in a FBXL19-mediated manner; leading to proteasomal degradation. In terms of processing, serotonylation of Gln-63 by TGM2 during activation and aggregation of platelets leads to constitutive activation of GTPase activity.

It is found in the cell membrane. The protein resides in the cytoplasm. Its subcellular location is the cytoskeleton. It localises to the cleavage furrow. The protein localises to the cell cortex. It is found in the midbody. The protein resides in the cell projection. Its subcellular location is the lamellipodium. It localises to the dendrite. The protein localises to the nucleus. The enzyme catalyses GTP + H2O = GDP + phosphate + H(+). Regulated by guanine nucleotide exchange factors (GEFs) which promote the exchange of bound GDP for free GTP, GTPase activating proteins (GAPs) which increase the GTP hydrolysis activity and GDP dissociation inhibitors which inhibit the dissociation of the nucleotide from the GTPase. Activated by GEFs such as ARHGEF2, ARHGEF3, ARHGEF28 and BCR. Inhibited by GAPs such as ARHGAP30. Inhibited by GDP dissociation inhibitors such as ARHGDIA. Small GTPase which cycles between an active GTP-bound and an inactive GDP-bound state. Mainly associated with cytoskeleton organization, in active state binds to a variety of effector proteins to regulate cellular responses such as cytoskeletal dynamics, cell migration and cell cycle. Regulates a signal transduction pathway linking plasma membrane receptors to the assembly of focal adhesions and actin stress fibers. Involved in a microtubule-dependent signal that is required for the myosin contractile ring formation during cell cycle cytokinesis. Plays an essential role in cleavage furrow formation. Required for the apical junction formation of keratinocyte cell-cell adhesion. Essential for the SPATA13-mediated regulation of cell migration and adhesion assembly and disassembly. The MEMO1-RHOA-DIAPH1 signaling pathway plays an important role in ERBB2-dependent stabilization of microtubules at the cell cortex. It controls the localization of APC and CLASP2 to the cell membrane, via the regulation of GSK3B activity. In turn, membrane-bound APC allows the localization of the MACF1 to the cell membrane, which is required for microtubule capture and stabilization. Regulates KCNA2 potassium channel activity by reducing its location at the cell surface in response to CHRM1 activation; promotes KCNA2 endocytosis. Acts as an allosteric activator of guanine nucleotide exchange factor ECT2 by binding in its activated GTP-bound form to the PH domain of ECT2 which stimulates the release of PH inhibition and promotes the binding of substrate RHOA to the ECT2 catalytic center. May be an activator of PLCE1. In neurons, involved in the inhibition of the initial spine growth. Upon activation by CaMKII, modulates dendritic spine structural plasticity by relaying CaMKII transient activation to synapse-specific, long-term signaling. Acts as a regulator of platelet alpha-granule release during activation and aggregation of platelets. When activated by DAAM1 may signal centrosome maturation and chromosomal segregation during cell division. May also be involved in contractile ring formation during cytokinesis. This is Transforming protein RhoA (RHOA) from Bos taurus (Bovine).